A 550-amino-acid chain; its full sequence is ATP synthase subunit alpha (550 aa).

172-179 (GDRKTGKT) provides a ligand contact to ATP. Positions 521-550 (EPAAEPLAGEEDRETVTRFHDDATDRPAGS) are disordered. The segment covering 534–550 (ETVTRFHDDATDRPAGS) has biased composition (basic and acidic residues).

The protein belongs to the ATPase alpha/beta chains family. In terms of assembly, F-type ATPases have 2 components, CF(1) - the catalytic core - and CF(0) - the membrane proton channel. CF(1) has five subunits: alpha(3), beta(3), gamma(1), delta(1), epsilon(1). CF(0) has three main subunits: a(1), b(2) and c(9-12). The alpha and beta chains form an alternating ring which encloses part of the gamma chain. CF(1) is attached to CF(0) by a central stalk formed by the gamma and epsilon chains, while a peripheral stalk is formed by the delta and b chains.

The protein resides in the cell membrane. It catalyses the reaction ATP + H2O + 4 H(+)(in) = ADP + phosphate + 5 H(+)(out). In terms of biological role, produces ATP from ADP in the presence of a proton gradient across the membrane. The alpha chain is a regulatory subunit. This is ATP synthase subunit alpha from Salinispora tropica (strain ATCC BAA-916 / DSM 44818 / JCM 13857 / NBRC 105044 / CNB-440).